A 120-amino-acid polypeptide reads, in one-letter code: MFLLTGYEYFLGFLLIAAAVPVLALVTNLIVAPKGRAGERRLTYESGMEPIGGAWIQFNIRYYMFALVFVIFDVETVFLYPWAVAFNRLGLLAFIEALIFIAILVIALAYAWRKGALEWS.

3 helical membrane passes run phenylalanine 10–isoleucine 30, methionine 64–valine 84, and leucine 89–alanine 109.

The protein belongs to the complex I subunit 3 family. In terms of assembly, NDH-1 can be composed of about 15 different subunits; different subcomplexes with different compositions have been identified which probably have different functions.

It localises to the cellular thylakoid membrane. The catalysed reaction is a plastoquinone + NADH + (n+1) H(+)(in) = a plastoquinol + NAD(+) + n H(+)(out). The enzyme catalyses a plastoquinone + NADPH + (n+1) H(+)(in) = a plastoquinol + NADP(+) + n H(+)(out). NDH-1 shuttles electrons from an unknown electron donor, via FMN and iron-sulfur (Fe-S) centers, to quinones in the respiratory and/or the photosynthetic chain. The immediate electron acceptor for the enzyme in this species is believed to be plastoquinone. Couples the redox reaction to proton translocation, and thus conserves the redox energy in a proton gradient. Cyanobacterial NDH-1 also plays a role in inorganic carbon-concentration. This is NAD(P)H-quinone oxidoreductase subunit 3 from Prochlorococcus marinus (strain MIT 9301).